Reading from the N-terminus, the 346-residue chain is Fructose-1,6-bisphosphatase class 1 (346 aa).

The Mg(2+) site is built by glutamate 96, aspartate 119, leucine 121, and aspartate 122. Substrate is bound by residues 122–125, asparagine 214, tyrosine 247, and lysine 277; that span reads DGSS. Mg(2+) is bound at residue glutamate 283.

It belongs to the FBPase class 1 family. Homotetramer. Mg(2+) is required as a cofactor.

Its subcellular location is the cytoplasm. The catalysed reaction is beta-D-fructose 1,6-bisphosphate + H2O = beta-D-fructose 6-phosphate + phosphate. It participates in carbohydrate biosynthesis; gluconeogenesis. This chain is Fructose-1,6-bisphosphatase class 1, found in Cytophaga hutchinsonii (strain ATCC 33406 / DSM 1761 / CIP 103989 / NBRC 15051 / NCIMB 9469 / D465).